Consider the following 299-residue polypeptide: MEFKLQELNLTNQDTGPYGITVSDKGKVWITQHKANMISCINLDGKITEYPLPTPDAKVMCLTISSDGEVWFTENAANKIGRITKKGIIKEYTLPNPDSAPYGITEGPNGDIWFTEMNGNRIGRITDDGKIREYELPNKGSYPSFITLGSDNALWFTENQNNAIGRITESGDITEFKIPTPASGPVGITKGNDDALWFVEIIGNKIGRITPLGEITEFKIPTPNARPHAITAGAGIDLWFTEWGANKIGRLTSNNIIEEYPIQIKSGEPHGICFDGETIWFAMECDKIGKLTLIKDNME.

Residue His-228 coordinates substrate. Glu-268 is a binding site for Mg(2+). His-270 (proton acceptor) is an active-site residue. Glu-284 is a Mg(2+) binding site.

It belongs to the Vgb family. In terms of assembly, monomer. It depends on Mg(2+) as a cofactor.

Functionally, inactivates the type B streptogramin antibiotics by linearizing the lactone ring at the ester linkage, generating a free phenylglycine carboxylate and converting the threonyl moiety into 2-amino-butenoic acid. The polypeptide is Virginiamycin B lyase (vgb) (Staphylococcus aureus).